The sequence spans 2226 residues: Histone-lysine N-methyltransferase ash1 (2226 aa).

The segment at methionine 1–lysine 145 is disordered. Polar residues predominate over residues isoleucine 32–arginine 52. Basic residues predominate over residues alanine 99–leucine 111. 3 positions are modified to phosphoserine: serine 135, serine 136, and serine 138. Threonine 200 and threonine 201 each carry phosphothreonine. Residues proline 260 to lysine 269 show a composition bias toward basic residues. Disordered stretches follow at residues proline 260–serine 324, arginine 343–lysine 367, alanine 673–leucine 695, serine 711–proline 749, and lysine 811–proline 832. Residues arginine 261–threonine 273 constitute a DNA-binding region (a.T hook 1). Over residues serine 294 to proline 306 the composition is skewed to low complexity. The span at lysine 307–serine 324 shows a compositional bias: polar residues. Over residues serine 711–asparagine 727 the composition is skewed to low complexity. Phosphoserine is present on residues serine 740, serine 831, and serine 977. A compositionally biased stretch (low complexity) spans serine 820–serine 831. Disordered stretches follow at residues glutamine 980 to arginine 1026 and serine 1049 to leucine 1230. Residues histidine 989–proline 999 are compositionally biased toward acidic residues. 2 DNA-binding regions (a.T hook) span residues glycine 1065–glutamine 1077 and alanine 1095–leucine 1107. The span at glutamate 1108–glutamine 1117 shows a compositional bias: pro residues. Over residues alanine 1186 to proline 1200 the composition is skewed to basic and acidic residues. Polar residues predominate over residues glutamate 1205 to glutamate 1219. An AWS domain is found at phenylalanine 1339 to alanine 1387. Positions proline 1390–asparagine 1506 constitute an SET domain. Residues glutamate 1514–glycine 1530 form the Post-SET domain. 2 disordered regions span residues valine 1536–isoleucine 1575 and arginine 1616–serine 1648. Residues glycine 1556–glutamine 1568 are compositionally biased toward basic residues. 2 stretches are compositionally biased toward low complexity: residues aspartate 1619 to alanine 1628 and arginine 1639 to serine 1648. In terms of domain architecture, Bromo spans lysine 1681 to serine 1789. The segment at proline 1808–leucine 1839 is disordered. The PHD-type zinc-finger motif lies at valine 1857–arginine 1903. The BAH domain occupies lysine 1952 to lysine 2072. Residues serine 2205 to threonine 2226 are disordered. The segment covering threonine 2214–threonine 2226 has biased composition (low complexity).

Belongs to the class V-like SAM-binding methyltransferase superfamily. Histone-lysine methyltransferase family. SET2 subfamily. Component of a large multiprotein complex distinct from complexes containing ash2 or brm. Interacts (via SET domain) with trx (via SET domain). Interacts with nej/cbp. Expressed throughout development but is present at higher levels during the embryonic and pupal stages than during the larval stages. During the larval stages it accumulates primarily in imaginal disks.

It localises to the nucleus. The protein localises to the chromosome. It catalyses the reaction L-lysyl(4)-[histone H3] + 3 S-adenosyl-L-methionine = N(6),N(6),N(6)-trimethyl-L-lysyl(4)-[histone H3] + 3 S-adenosyl-L-homocysteine + 3 H(+). Its function is as follows. Trithorax group (TrxG) protein that has histone methyltransferase activity. Specifically trimethylates 'Lys-4' of histone H3 (H3K4me3), a specific tag for epigenetic transcriptional activation. TrxG proteins are generally required to maintain the transcriptionally active state of homeotic genes throughout development. Does not act as a coactivator required for transcriptional activation, but specifically prevents inappropriate Polycomb Group (PcG) silencing of homeotic genes in cells in which they must stay transcriptionally active. The chain is Histone-lysine N-methyltransferase ash1 (ash1) from Drosophila melanogaster (Fruit fly).